A 279-amino-acid polypeptide reads, in one-letter code: Acetylglutamate kinase (279 aa).

Substrate is bound by residues 64 to 65, arginine 86, and asparagine 177; that span reads GG.

It belongs to the acetylglutamate kinase family. ArgB subfamily.

It is found in the cytoplasm. The catalysed reaction is N-acetyl-L-glutamate + ATP = N-acetyl-L-glutamyl 5-phosphate + ADP. Its pathway is amino-acid biosynthesis; L-arginine biosynthesis; N(2)-acetyl-L-ornithine from L-glutamate: step 2/4. Catalyzes the ATP-dependent phosphorylation of N-acetyl-L-glutamate. The protein is Acetylglutamate kinase of Campylobacter jejuni subsp. jejuni serotype O:6 (strain 81116 / NCTC 11828).